Consider the following 33-residue polypeptide: Phosphoglycerate kinase (33 aa).

Residue Lys13 participates in AMP binding. Lys13 contacts ATP.

This sequence belongs to the phosphoglycerate kinase family. Monomer. Mg(2+) is required as a cofactor.

The catalysed reaction is (2R)-3-phosphoglycerate + ATP = (2R)-3-phospho-glyceroyl phosphate + ADP. The protein is Phosphoglycerate kinase of Pseudotsuga menziesii (Douglas-fir).